The following is a 229-amino-acid chain: Uracil-DNA glycosylase (229 aa).

Asp-65 functions as the Proton acceptor in the catalytic mechanism.

This sequence belongs to the uracil-DNA glycosylase (UDG) superfamily. UNG family.

The protein resides in the cytoplasm. The enzyme catalyses Hydrolyzes single-stranded DNA or mismatched double-stranded DNA and polynucleotides, releasing free uracil.. Excises uracil residues from the DNA which can arise as a result of misincorporation of dUMP residues by DNA polymerase or due to deamination of cytosine. This is Uracil-DNA glycosylase from Oceanobacillus iheyensis (strain DSM 14371 / CIP 107618 / JCM 11309 / KCTC 3954 / HTE831).